A 228-amino-acid chain; its full sequence is 5'-methylthioadenosine/S-adenosylhomocysteine nucleosidase (228 aa).

The active-site Proton acceptor is E11. Residues G77, I151, and 172-173 (ME) contribute to the substrate site. The active-site Proton donor is D196.

Belongs to the PNP/UDP phosphorylase family. MtnN subfamily.

The catalysed reaction is S-adenosyl-L-homocysteine + H2O = S-(5-deoxy-D-ribos-5-yl)-L-homocysteine + adenine. It catalyses the reaction S-methyl-5'-thioadenosine + H2O = 5-(methylsulfanyl)-D-ribose + adenine. The enzyme catalyses 5'-deoxyadenosine + H2O = 5-deoxy-D-ribose + adenine. The protein operates within amino-acid biosynthesis; L-methionine biosynthesis via salvage pathway; S-methyl-5-thio-alpha-D-ribose 1-phosphate from S-methyl-5'-thioadenosine (hydrolase route): step 1/2. Functionally, catalyzes the irreversible cleavage of the glycosidic bond in both 5'-methylthioadenosine (MTA) and S-adenosylhomocysteine (SAH/AdoHcy) to adenine and the corresponding thioribose, 5'-methylthioribose and S-ribosylhomocysteine, respectively. Also cleaves 5'-deoxyadenosine, a toxic by-product of radical S-adenosylmethionine (SAM) enzymes, into 5-deoxyribose and adenine. This chain is 5'-methylthioadenosine/S-adenosylhomocysteine nucleosidase, found in Staphylococcus carnosus (strain TM300).